A 632-amino-acid chain; its full sequence is Probable potassium transport system protein Kup (632 aa).

12 helical membrane passes run 19–39, 59–79, 110–130, 146–166, 178–198, 221–241, 256–276, 298–318, 346–366, 375–395, 403–423, and 428–448; these read LVVG…LYSL, IISM…VMFV, LIMM…VITP, PGLS…LFFI, FGPI…IHLV, LQAF…EALY, WFVL…AMLL, MVLL…SGAF, IYMP…VLAF, AYGI…ALVM, PALV…FFAA, and IAEG…LLMT.

Belongs to the HAK/KUP transporter (TC 2.A.72) family.

The protein resides in the cell inner membrane. It catalyses the reaction K(+)(in) + H(+)(in) = K(+)(out) + H(+)(out). Its function is as follows. Transport of potassium into the cell. Likely operates as a K(+):H(+) symporter. This is Probable potassium transport system protein Kup from Cupriavidus metallidurans (strain ATCC 43123 / DSM 2839 / NBRC 102507 / CH34) (Ralstonia metallidurans).